Here is a 392-residue protein sequence, read N- to C-terminus: Putative nicotinate phosphoribosyltransferase (392 aa).

3 residues coordinate nicotinate: Tyr-21, Phe-138, and Thr-179. His-182 is subject to Phosphohistidine. Arg-235 serves as a coordination point for nicotinate. Positions 240, 272, and 293 each coordinate 5-phospho-alpha-D-ribose 1-diphosphate. Zn(2+) is bound by residues Cys-330, Cys-333, Cys-348, and Cys-350.

It belongs to the NAPRTase family. Highly divergent. Homodimer. Forms a trimer of dimers in the crystal. In terms of processing, transiently phosphorylated on a His residue during the reaction cycle. Phosphorylation strongly increases the affinity for substrates and increases the rate of nicotinate D-ribonucleotide production. Dephosphorylation regenerates the low-affinity form of the enzyme, leading to product release.

It carries out the reaction nicotinate + 5-phospho-alpha-D-ribose 1-diphosphate + ATP + H2O = nicotinate beta-D-ribonucleotide + ADP + phosphate + diphosphate. Its pathway is cofactor biosynthesis; NAD(+) biosynthesis; nicotinate D-ribonucleotide from nicotinate: step 1/1. Functionally, catalyzes the synthesis of beta-nicotinate D-ribonucleotide from nicotinate and 5-phospho-D-ribose 1-phosphate at the expense of ATP. The sequence is that of Putative nicotinate phosphoribosyltransferase from Thermoplasma acidophilum (strain ATCC 25905 / DSM 1728 / JCM 9062 / NBRC 15155 / AMRC-C165).